Here is a 155-residue protein sequence, read N- to C-terminus: Small ribosomal subunit protein uS7 (155 aa).

The protein belongs to the universal ribosomal protein uS7 family. In terms of assembly, part of the 30S ribosomal subunit. Contacts proteins S9 and S11.

One of the primary rRNA binding proteins, it binds directly to 16S rRNA where it nucleates assembly of the head domain of the 30S subunit. Is located at the subunit interface close to the decoding center, probably blocks exit of the E-site tRNA. The sequence is that of Small ribosomal subunit protein uS7 from Mycoplasma capricolum subsp. capricolum (strain California kid / ATCC 27343 / NCTC 10154).